The following is a 364-amino-acid chain: Histidinol-phosphate aminotransferase (364 aa).

At Lys226 the chain carries N6-(pyridoxal phosphate)lysine.

This sequence belongs to the class-II pyridoxal-phosphate-dependent aminotransferase family. Histidinol-phosphate aminotransferase subfamily. In terms of assembly, homodimer. Pyridoxal 5'-phosphate serves as cofactor.

The catalysed reaction is L-histidinol phosphate + 2-oxoglutarate = 3-(imidazol-4-yl)-2-oxopropyl phosphate + L-glutamate. It participates in amino-acid biosynthesis; L-histidine biosynthesis; L-histidine from 5-phospho-alpha-D-ribose 1-diphosphate: step 7/9. In Campylobacter jejuni subsp. jejuni serotype O:2 (strain ATCC 700819 / NCTC 11168), this protein is Histidinol-phosphate aminotransferase.